The following is a 194-amino-acid chain: Imidazoleglycerol-phosphate dehydratase (194 aa).

This sequence belongs to the imidazoleglycerol-phosphate dehydratase family.

Its subcellular location is the cytoplasm. The catalysed reaction is D-erythro-1-(imidazol-4-yl)glycerol 3-phosphate = 3-(imidazol-4-yl)-2-oxopropyl phosphate + H2O. The protein operates within amino-acid biosynthesis; L-histidine biosynthesis; L-histidine from 5-phospho-alpha-D-ribose 1-diphosphate: step 6/9. This chain is Imidazoleglycerol-phosphate dehydratase, found in Bacillus cereus (strain ATCC 14579 / DSM 31 / CCUG 7414 / JCM 2152 / NBRC 15305 / NCIMB 9373 / NCTC 2599 / NRRL B-3711).